The primary structure comprises 784 residues: Cas scaffolding protein family member 4 (784 aa).

The 63-residue stretch at 11-73 folds into the SH3 domain; it reads PKALLARALY…PANRLQILEE (63 aa). Phosphoserine is present on residues Ser-197, Ser-246, Ser-302, Ser-373, and Ser-387. Residues 343-376 are disordered; that stretch reads TPNIYDVPRAMPDVPQAGKELGKAGGPSENSVDH. The stretch at 466-536 forms a coiled coil; the sequence is RDSLEANIDA…LLETKERLES (71 aa). Positions 614-635 are disordered; sequence KEGESYQRKAPFQKQRASEQPP.

Belongs to the CAS family. In terms of assembly, interacts (via SH3 domain) with PTK2/FAK1 (via C-terminus). Post-translationally, phosphorylated on tyrosines by SRC.

Its subcellular location is the cytoplasm. It localises to the cytoskeleton. The protein localises to the cell junction. It is found in the focal adhesion. Its function is as follows. Docking protein that plays a role in tyrosine kinase-based signaling related to cell adhesion and cell spreading. Regulates PTK2/FAK1 activity, focal adhesion integrity, and cell spreading. This chain is Cas scaffolding protein family member 4, found in Sus scrofa (Pig).